The sequence spans 394 residues: RNA binding protein fox-1 homolog 2 (394 aa).

Disordered stretches follow at residues 1-70 and 83-135; these read MGRL…DYAG and TQAH…HVSN. 2 stretches are compositionally biased toward polar residues: residues 24-36 and 83-103; these read RDSQ…TTTP and TQAH…SLTT. Residues 105 to 125 are compositionally biased toward low complexity; that stretch reads GGAQTDGQQSQTQSSENSESK. The RRM domain occupies 129 to 205; it reads KRLHVSNIPF…RKIEVNNATA (77 aa). The residue at position 285 (R285) is an Omega-N-methylarginine. Asymmetric dimethylarginine is present on residues R301 and R333. R385 and R390 each carry asymmetric dimethylarginine; alternate. An omega-N-methylarginine; alternate mark is found at R385 and R390.

Interacts with ER-alpha N-terminal activation domain. Interacts with RBPMS; the interaction allows cooperative assembly of stable cell-specific alternative splicing regulatory complexes.

The protein localises to the nucleus. It is found in the cytoplasm. RNA-binding protein that regulates alternative splicing events by binding to 5'-UGCAUGU-3' elements. Prevents binding of U2AF2 to the 3'-splice site. Regulates alternative splicing of tissue-specific exons and of differentially spliced exons during erythropoiesis. Seems to act as a coregulatory factor of ER-alpha. Together with RNA binding proteins RBPMS and MBNL1/2, activates vascular smooth muscle cells alternative splicing events. This Bos taurus (Bovine) protein is RNA binding protein fox-1 homolog 2 (RBFOX2).